An 87-amino-acid polypeptide reads, in one-letter code: Small ribosomal subunit protein bS20 (87 aa).

Belongs to the bacterial ribosomal protein bS20 family.

In terms of biological role, binds directly to 16S ribosomal RNA. In Corynebacterium urealyticum (strain ATCC 43042 / DSM 7109), this protein is Small ribosomal subunit protein bS20.